The chain runs to 153 residues: Glucose-6-phosphate 1-dehydrogenase (153 aa).

Residues Arg-21 and Lys-120 each contribute to the NADP(+) site. Lys-120 lines the D-glucose 6-phosphate pocket.

It belongs to the glucose-6-phosphate dehydrogenase family.

The protein resides in the cytoplasm. The protein localises to the cytosol. It carries out the reaction D-glucose 6-phosphate + NADP(+) = 6-phospho-D-glucono-1,5-lactone + NADPH + H(+). The protein operates within carbohydrate degradation; pentose phosphate pathway; D-ribulose 5-phosphate from D-glucose 6-phosphate (oxidative stage): step 1/3. Functionally, cytosolic glucose-6-phosphate dehydrogenase that catalyzes the first and rate-limiting step of the oxidative branch within the pentose phosphate pathway/shunt, an alternative route to glycolysis for the dissimilation of carbohydrates and a major source of reducing power and metabolic intermediates for fatty acid and nucleic acid biosynthetic processes. The chain is Glucose-6-phosphate 1-dehydrogenase (ZW) from Hyalophora cecropia (Cecropia moth).